We begin with the raw amino-acid sequence, 240 residues long: tRNA pseudouridine synthase A (240 aa).

Aspartate 50 functions as the Nucleophile in the catalytic mechanism. Tyrosine 109 serves as a coordination point for substrate.

The protein belongs to the tRNA pseudouridine synthase TruA family. Homodimer.

It carries out the reaction uridine(38/39/40) in tRNA = pseudouridine(38/39/40) in tRNA. Functionally, formation of pseudouridine at positions 38, 39 and 40 in the anticodon stem and loop of transfer RNAs. This is tRNA pseudouridine synthase A from Campylobacter jejuni (strain RM1221).